Consider the following 750-residue polypeptide: Alpha-galactosidase C (750 aa).

The first 26 residues, 1 to 26 (MFRSTATVAAATAMGLLTATGHGSLA), serve as a signal peptide directing secretion. Asparagine 58, asparagine 162, asparagine 186, asparagine 194, asparagine 366, asparagine 428, asparagine 432, and asparagine 453 each carry an N-linked (GlcNAc...) asparagine glycan. Aspartate 511 (nucleophile) is an active-site residue. Aspartate 573 serves as the catalytic Proton donor.

The protein belongs to the glycosyl hydrolase 36 family. Homotetramer. Mg(2+) is required as a cofactor. Requires NAD(+) as cofactor.

The protein resides in the secreted. It catalyses the reaction Hydrolysis of terminal, non-reducing alpha-D-galactose residues in alpha-D-galactosides, including galactose oligosaccharides, galactomannans and galactolipids.. Hydrolyzes a variety of simple alpha-D-galactoside as well as more complex molecules such as oligosaccharides and polysaccharides. Active on paranitrophenyl-alpha-galactoside, raffinose, locust bean gum and gum guar. This chain is Alpha-galactosidase C (aglC), found in Emericella nidulans (strain FGSC A4 / ATCC 38163 / CBS 112.46 / NRRL 194 / M139) (Aspergillus nidulans).